Here is a 423-residue protein sequence, read N- to C-terminus: Histone acetyltransferase type B subunit 2 (423 aa).

WD repeat units follow at residues proline 138 to glutamate 174, serine 175 to serine 224, serine 228 to lysine 268, proline 271 to histidine 311, and glycine 315 to serine 355. Positions aspartate 357–aspartate 361 are interaction with the histone H4 N-terminus. Residues glycine 372 to serine 412 form a WD 6 repeat.

It belongs to the WD repeat RBAP46/RBAP48/MSI1 family. Component of the HAT-B complex composed of at least HAT1 and HAT2. The HAT-B complex binds to histone H4 tail.

It is found in the cytoplasm. The protein resides in the nucleus. Its function is as follows. Regulatory subunit of the histone acetylase B (HAT-B) complex. The complex acetylates 'Lys-12' of histone H4 which is required for telomeric silencing. The polypeptide is Histone acetyltransferase type B subunit 2 (HAT2) (Eremothecium gossypii (strain ATCC 10895 / CBS 109.51 / FGSC 9923 / NRRL Y-1056) (Yeast)).